We begin with the raw amino-acid sequence, 183 residues long: Lipid droplet coating protein mpl1 (183 aa).

The protein belongs to the perilipin family.

The protein localises to the lipid droplet. Lipid droplet coating protein that regulates lipid metabolism, appressorial turgor pressure, and virulence. Appressorial turgor pressure is important for breaching the insect cuticle during infection. The polypeptide is Lipid droplet coating protein mpl1 (Metarhizium robertsii (strain ARSEF 23 / ATCC MYA-3075) (Metarhizium anisopliae (strain ARSEF 23))).